The primary structure comprises 557 residues: Cytochrome P450 734A2 (557 aa).

A helical transmembrane segment spans residues 13–35 (WATWRVAAVAAAAAVWVTMHVAA). Residue Cys-495 participates in heme binding.

Belongs to the cytochrome P450 family. It depends on heme as a cofactor. Expressed in roots, shoot apex, leaf sheaths and leaf blades.

The protein resides in the membrane. In terms of biological role, cytochrome P450 involved in brassinosteroids (BRs) inactivation and regulation of BRs homeostasis. Is a multifunctional and multisubstrate enzyme that controls the endogenous bioactive BR content both by direct inactivation of castasterone (CS) and by decreasing the levels of BR precursors. Catalyzes the oxidation of carbon 22 hydroxylated BR intermediates to produce C26 oxidized metabolites. The protein is Cytochrome P450 734A2 (CYP734A2) of Oryza sativa subsp. japonica (Rice).